A 208-amino-acid polypeptide reads, in one-letter code: MKPIRIGIGGPVGSGKTHLVEQLTRAMHESYELAVITNDIYTKEDAQFLVKHGILPEDRIIGVETGGCPHTAIREDASMNFEAIHELKQRFTNLDIIFVESGGDNLSATFSPELVDGFIYVIDVAEGQDIPRKGGPGVTRSDLLVINKIDLAPYVEVDLDIMEEDAKQARGERPFVFTDQKRGKGIETIIDWIKRELLLEDMVKEPSV.

10 to 17 contributes to the GTP binding site; the sequence is GPVGSGKT.

This sequence belongs to the SIMIBI class G3E GTPase family. UreG subfamily. Homodimer. UreD, UreF and UreG form a complex that acts as a GTP-hydrolysis-dependent molecular chaperone, activating the urease apoprotein by helping to assemble the nickel containing metallocenter of UreC. The UreE protein probably delivers the nickel.

Its subcellular location is the cytoplasm. Functionally, facilitates the functional incorporation of the urease nickel metallocenter. This process requires GTP hydrolysis, probably effectuated by UreG. The sequence is that of Urease accessory protein UreG from Halalkalibacterium halodurans (strain ATCC BAA-125 / DSM 18197 / FERM 7344 / JCM 9153 / C-125) (Bacillus halodurans).